The primary structure comprises 252 residues: MQICLMDETGATDGALSVLAARWGLEHDEDNPMALVLTPQHLELRKRDEPKLGGIFVDFVGGAMAHRRKFGGGRGEAVAKAVGIKGDYLPDVVDATAGLGRDAFVLASVGCRVRMLERNPVVAALLDDGLTRGYADADIGPWLQQRLQLIHASSLTALTDITPRPQVVYLDPMFPHRQKSALVKKEMRVFQSLVGPDLDADGLLEPARQLATKRVVVKRPDYAPPLADVATPNAIVTKGHRFDIYAGTPLTE.

S-adenosyl-L-methionine is bound by residues 101-102, 117-118, 153-154, and aspartate 171; these read RD, ER, and SS.

This sequence belongs to the methyltransferase superfamily. RsmJ family.

The protein resides in the cytoplasm. It carries out the reaction guanosine(1516) in 16S rRNA + S-adenosyl-L-methionine = N(2)-methylguanosine(1516) in 16S rRNA + S-adenosyl-L-homocysteine + H(+). Its function is as follows. Specifically methylates the guanosine in position 1516 of 16S rRNA. This chain is Ribosomal RNA small subunit methyltransferase J, found in Salmonella schwarzengrund (strain CVM19633).